Consider the following 331-residue polypeptide: Leucine-rich repeat-containing protein 26 (331 aa).

Positions 1 to 26 (MRGSFFSRLPPQLSLLLLLSLRRVWT) are cleaved as a signal peptide. Residues 27–261 (QEDIGTAPSK…QCTQSLAARD (235 aa)) are Extracellular-facing. An LRRNT domain is found at 34–71 (PSKSPVAPECPEACSCSLGGKANCSALALPAVPADLSW). 2 cysteine pairs are disulfide-bonded: C43-C49 and C47-C57. 5 LRR repeats span residues 72–93 (QVRS…AFAN), 96–117 (ALLY…AFWG), 120–141 (VLQW…TFAP), 144–165 (ALSF…ILGP), and 168–191 (LLRV…NNLP). The 55-residue stretch at 201–255 (NPWTCNCALRPLCTWLRKHPRPASETETLLCVSPRLQTLSLLTAFPDAAFKQCTQ) folds into the LRRCT domain. Disulfide bonds link C205-C231 and C207-C253. A helical transmembrane segment spans residues 262–282 (LAVVYALGPVSFLASLAICLA). The Cytoplasmic portion of the chain corresponds to 283–331 (LGSVLTACGARRRRRRRTTVRHLLRRQLDPEGPPSLEDAGSPVTAAIQA). A disordered region spans residues 310–331 (LDPEGPPSLEDAGSPVTAAIQA).

Interacts with KCNMA1.

Its subcellular location is the cell membrane. It is found in the cytoplasm. The protein localises to the cytoskeleton. Functionally, auxiliary protein of the large-conductance, voltage and calcium-activated potassium channel (BK alpha). Required for the conversion of BK alpha channels from a high-voltage to a low-voltage activated channel type in non-excitable cells. These are characterized by negative membrane voltages and constant low levels of calcium. The polypeptide is Leucine-rich repeat-containing protein 26 (Lrrc26) (Mus musculus (Mouse)).